We begin with the raw amino-acid sequence, 203 residues long: Small ribosomal subunit protein uS4 (203 aa).

Residues 1 to 46 (MSKRQSAKYKLDRRMGENIWGRPKSPVNRREYGPGQHGQRRKGKMS) are disordered. Residues 94 to 157 (RRLDAVVYRA…QEMALVAEAQ (64 aa)) enclose the S4 RNA-binding domain.

It belongs to the universal ribosomal protein uS4 family. In terms of assembly, part of the 30S ribosomal subunit. Contacts protein S5. The interaction surface between S4 and S5 is involved in control of translational fidelity.

One of the primary rRNA binding proteins, it binds directly to 16S rRNA where it nucleates assembly of the body of the 30S subunit. In terms of biological role, with S5 and S12 plays an important role in translational accuracy. This is Small ribosomal subunit protein uS4 from Sphingopyxis alaskensis (strain DSM 13593 / LMG 18877 / RB2256) (Sphingomonas alaskensis).